The sequence spans 384 residues: MAKHLFTSESVSEGHPDKIADQISDAVLDAILEQDPKARVACETYVKTGMVMVGGEVTTSAWVDIEEITRKTVRDIGYTHSDMGFDADSCAILNVIGKQSPDINQGVDRADPKEQGAGDQGLMFGYANNETDVLMPAPITYSHKLVKRQSEVRKDKTLPWLRPDAKSQVTFAYNSDGSIAGIDAVVLSTQHSEDVTQADLIEGVMETIIKPVLPAKWLSKDTKYFINPTGRFVIGGPVGDCGLTGRKIIVDTYGGMARHGGGAFSGKDPSKVDRSAAYAARYVAKNIVAAGLADRCEIQVSYAIGVAEPTSISIETFGTAKVGEELLIDLVRRHFDLRPYGLTEMLNLARPIYQATAAYGHFGRNEFPWEATDKVDALRADAGL.

An ATP-binding site is contributed by histidine 15. Aspartate 17 serves as a coordination point for Mg(2+). Glutamate 43 provides a ligand contact to K(+). Glutamate 56 and glutamine 99 together coordinate L-methionine. The flexible loop stretch occupies residues 99 to 109 (QSPDINQGVDR). Residues 164–166 (DAK), 231–232 (RF), aspartate 240, 246–247 (RK), alanine 263, and lysine 267 contribute to the ATP site. Aspartate 240 is an L-methionine binding site. Lysine 271 contacts L-methionine.

It belongs to the AdoMet synthase family. In terms of assembly, homotetramer; dimer of dimers. It depends on Mg(2+) as a cofactor. The cofactor is K(+).

It localises to the cytoplasm. It catalyses the reaction L-methionine + ATP + H2O = S-adenosyl-L-methionine + phosphate + diphosphate. Its pathway is amino-acid biosynthesis; S-adenosyl-L-methionine biosynthesis; S-adenosyl-L-methionine from L-methionine: step 1/1. Its function is as follows. Catalyzes the formation of S-adenosylmethionine (AdoMet) from methionine and ATP. The overall synthetic reaction is composed of two sequential steps, AdoMet formation and the subsequent tripolyphosphate hydrolysis which occurs prior to release of AdoMet from the enzyme. In Shewanella pealeana (strain ATCC 700345 / ANG-SQ1), this protein is S-adenosylmethionine synthase.